We begin with the raw amino-acid sequence, 603 residues long: Phosphogluconate dehydratase (603 aa).

[4Fe-4S] cluster-binding residues include Cys-154 and Cys-221.

Belongs to the IlvD/Edd family. It depends on [4Fe-4S] cluster as a cofactor.

It catalyses the reaction 6-phospho-D-gluconate = 2-dehydro-3-deoxy-6-phospho-D-gluconate + H2O. Its pathway is carbohydrate metabolism; Entner-Doudoroff pathway. Its function is as follows. Catalyzes the dehydration of 6-phospho-D-gluconate to 2-dehydro-3-deoxy-6-phospho-D-gluconate. This Escherichia coli O157:H7 protein is Phosphogluconate dehydratase.